Here is a 1095-residue protein sequence, read N- to C-terminus: 1-phosphatidylinositol 4,5-bisphosphate phosphodiesterase (1095 aa).

Residues 319–469 (MEMDQPLAHY…LKRKILIKNK (151 aa)) form the PI-PLC X-box domain. Residues His334 and His381 contribute to the active site. Residues Lys467 and Lys469 each contribute to the substrate site. A disordered region spans residues 487 to 529 (ELKTDDDPEEDASAGKPPEAAAAPAPAPEAAAAAEGAAEGGGG). The segment covering 500 to 523 (AGKPPEAAAAPAPAPEAAAAAEGA) has biased composition (low complexity). The PI-PLC Y-box domain occupies 550 to 666 (LSSMVNYAQP…GYLLKPDFMR (117 aa)). The substrate site is built by Ser579 and Arg606. Positions 666-794 (RRADKDFDPF…SLRTEANFPM (129 aa)) constitute a C2 domain. Disordered regions lie at residues 842-863 (IEEQ…EKKE) and 1000-1030 (QAKM…LREK). Basic and acidic residues-rich tracts occupy residues 852 to 863 (DAGKAKEEEKKE) and 1007 to 1030 (TAKE…LREK).

As to quaternary structure, interacts with inaD. Abundantly expressed in the adult retina.

It catalyses the reaction a 1,2-diacyl-sn-glycero-3-phospho-(1D-myo-inositol-4,5-bisphosphate) + H2O = 1D-myo-inositol 1,4,5-trisphosphate + a 1,2-diacyl-sn-glycerol + H(+). The production of the second messenger molecules diacylglycerol (DAG) and inositol 1,4,5-trisphosphate (IP3) is mediated by activated phosphatidylinositol-specific phospholipase C enzymes. Essential component of the phototransduction pathway. Essential downstream component of a hh-signaling pathway which regulates the Duox-dependent gut immune response to bacterial uracil; required for the activation of Cad99C and consequently Cad99C-dependent endosome formation, which is essential for the Duox-dependent production of reactive oxygen species (ROS) in response to intestinal bacterial infection. The protein is 1-phosphatidylinositol 4,5-bisphosphate phosphodiesterase of Drosophila melanogaster (Fruit fly).